Reading from the N-terminus, the 404-residue chain is Cysteine desulfurase IscS (404 aa).

Pyridoxal 5'-phosphate is bound by residues 75 to 76 (AT), asparagine 155, glutamine 183, and 203 to 205 (SAH). Residue lysine 206 is modified to N6-(pyridoxal phosphate)lysine. Pyridoxal 5'-phosphate is bound at residue threonine 243. The Cysteine persulfide intermediate role is filled by cysteine 328. Cysteine 328 provides a ligand contact to [2Fe-2S] cluster.

It belongs to the class-V pyridoxal-phosphate-dependent aminotransferase family. NifS/IscS subfamily. As to quaternary structure, homodimer. Forms a heterotetramer with IscU, interacts with other sulfur acceptors. Requires pyridoxal 5'-phosphate as cofactor.

It localises to the cytoplasm. The catalysed reaction is (sulfur carrier)-H + L-cysteine = (sulfur carrier)-SH + L-alanine. Its pathway is cofactor biosynthesis; iron-sulfur cluster biosynthesis. In terms of biological role, master enzyme that delivers sulfur to a number of partners involved in Fe-S cluster assembly, tRNA modification or cofactor biosynthesis. Catalyzes the removal of elemental sulfur atoms from cysteine to produce alanine. Functions as a sulfur delivery protein for Fe-S cluster synthesis onto IscU, an Fe-S scaffold assembly protein, as well as other S acceptor proteins. The protein is Cysteine desulfurase IscS of Tolumonas auensis (strain DSM 9187 / NBRC 110442 / TA 4).